Here is a 76-residue protein sequence, read N- to C-terminus: Candidate secreted effector protein MPL124497 (76 aa).

Residues 1 to 21 (MKLIIFAAISVAFMSFDQVLG) form the signal peptide.

It belongs to the CPGH1 family.

It is found in the secreted. It localises to the host cell. Its subcellular location is the host cytoplasm. The protein resides in the host nucleus. Rust effector delivered into infected tissues to modulate host functions and contribute to pathogen virulence. Enhances leaf colonization by the bacteria Pseudomonas syringae and the oomycete Hyaloperonospora arabidopsidis pathogens in an Arabidopsis thaliana infection model. The protein is Candidate secreted effector protein MPL124497 of Melampsora larici-populina (strain 98AG31 / pathotype 3-4-7) (Poplar leaf rust fungus).